The sequence spans 908 residues: Disease resistance protein RPP8 (908 aa).

Residues 15 to 57 (DLLSRESERLQGIDGQLDGLKRQLRSLQSLLKDADAKKHGSDR) are a coiled coil. The 314-residue stretch at 146–459 (RQRVQREIRQ…AEGIYDGSTI (314 aa)) folds into the NB-ARC domain. 192 to 199 (GMGGIGKT) is a binding site for ATP. LRR repeat units follow at residues 575–600 (LTLLRVLDLSWVKFEGGKLPCSIGGL), 601–623 (IHLRYLSLYEAKVSHLPSTMRNL), 648–673 (MIQLRYLSLPLKMDDKTKLELGDLVN), 693–718 (MTKLRYLAVSLSERCNFETLSSSLRE), 722–746 (LETLNFLFSLETYMVDYMGEFVLDH), 748–770 (IHLKQLGLAVRMSKIPDQHQFPP), 793–820 (LLHLKSVRLARKAFLGSRMVCSKGGFPQ), 842–867 (MPCLRTLTIDDCKKLKELPDGLKYIT), and 882–905 (KEKLVPGGEDYYKVQHIPDVQFIN).

This sequence belongs to the disease resistance NB-LRR family. RPP8/HRT subfamily. Interacts with the NAC protein TIP. Interacts with MORC1/CRT1. Interacts with COP1 and is subsequently degraded in a 26s proteasome dependent manner. In terms of tissue distribution, mostly expressed in leaves, and, to a lower extent, in roots.

It is found in the cell membrane. Its function is as follows. Disease resistance protein. Resistance proteins guard the plant against pathogens that contain an appropriate avirulence protein via an indirect interaction with this avirulence protein. That triggers a defense system including the hypersensitive response, which restricts the pathogen growth. The interaction with TIP (TCV-interacting protein) may be essential for the recognition of the avirulence proteins, and the triggering of the defense response. Triggers resistance to turnip crinkle virus (TCV) via a SAG101-dependent pathway. The polypeptide is Disease resistance protein RPP8 (RPP8) (Arabidopsis thaliana (Mouse-ear cress)).